A 1207-amino-acid polypeptide reads, in one-letter code: DNA-directed RNA polymerase subunit beta' (1207 aa).

Zn(2+) contacts are provided by cysteine 60, cysteine 62, cysteine 75, and cysteine 78. 3 residues coordinate Mg(2+): aspartate 449, aspartate 451, and aspartate 453. Cysteine 822, cysteine 896, cysteine 903, and cysteine 906 together coordinate Zn(2+).

It belongs to the RNA polymerase beta' chain family. As to quaternary structure, the RNAP catalytic core consists of 2 alpha, 1 beta, 1 beta' and 1 omega subunit. When a sigma factor is associated with the core the holoenzyme is formed, which can initiate transcription. Mg(2+) serves as cofactor. The cofactor is Zn(2+).

It carries out the reaction RNA(n) + a ribonucleoside 5'-triphosphate = RNA(n+1) + diphosphate. Functionally, DNA-dependent RNA polymerase catalyzes the transcription of DNA into RNA using the four ribonucleoside triphosphates as substrates. The chain is DNA-directed RNA polymerase subunit beta' from Staphylococcus saprophyticus subsp. saprophyticus (strain ATCC 15305 / DSM 20229 / NCIMB 8711 / NCTC 7292 / S-41).